The chain runs to 57 residues: Large ribosomal subunit protein bL32 (57 aa).

This sequence belongs to the bacterial ribosomal protein bL32 family.

The polypeptide is Large ribosomal subunit protein bL32 (Halothermothrix orenii (strain H 168 / OCM 544 / DSM 9562)).